Reading from the N-terminus, the 323-residue chain is ATP synthase gamma chain (323 aa).

This sequence belongs to the ATPase gamma chain family. As to quaternary structure, F-type ATPases have 2 components, CF(1) - the catalytic core - and CF(0) - the membrane proton channel. CF(1) has five subunits: alpha(3), beta(3), gamma(1), delta(1), epsilon(1). CF(0) has three main subunits: a, b and c.

It localises to the cell inner membrane. Its function is as follows. Produces ATP from ADP in the presence of a proton gradient across the membrane. The gamma chain is believed to be important in regulating ATPase activity and the flow of protons through the CF(0) complex. This Rickettsia peacockii (strain Rustic) protein is ATP synthase gamma chain.